The primary structure comprises 169 residues: Small ribosomal subunit protein uS13m (169 aa).

Positions 149 to 169 (KKLQEKKNKEQKKSQKCKTKK) are disordered. Positions 150-161 (KLQEKKNKEQKK) are enriched in basic and acidic residues.

Belongs to the universal ribosomal protein uS13 family. As to quaternary structure, part of the small ribosomal subunit.

The protein localises to the mitochondrion. Located at the top of the head of the small subunit, it contacts several helices of the small subunit rRNA. The sequence is that of Small ribosomal subunit protein uS13m (mrps13) from Dictyostelium discoideum (Social amoeba).